Here is a 505-residue protein sequence, read N- to C-terminus: Glutamate--tRNA ligase (505 aa).

Residues 12 to 22 (PSPTGDPHVGT) carry the 'HIGH' region motif. A 'KMSKS' region motif is present at residues 253-257 (KLSKR). Lys256 contacts ATP.

The protein belongs to the class-I aminoacyl-tRNA synthetase family. Glutamate--tRNA ligase type 1 subfamily. Monomer.

The protein resides in the cytoplasm. It carries out the reaction tRNA(Glu) + L-glutamate + ATP = L-glutamyl-tRNA(Glu) + AMP + diphosphate. Catalyzes the attachment of glutamate to tRNA(Glu) in a two-step reaction: glutamate is first activated by ATP to form Glu-AMP and then transferred to the acceptor end of tRNA(Glu). This Chlamydia felis (strain Fe/C-56) (Chlamydophila felis) protein is Glutamate--tRNA ligase.